Consider the following 140-residue polypeptide: NADPH-dependent 7-cyano-7-deazaguanine reductase (140 aa).

Catalysis depends on Cys-49, which acts as the Thioimide intermediate. Catalysis depends on Asp-56, which acts as the Proton donor. Substrate is bound by residues 71–73 (IEL) and 90–91 (HE).

This sequence belongs to the GTP cyclohydrolase I family. QueF type 1 subfamily.

Its subcellular location is the cytoplasm. It catalyses the reaction 7-aminomethyl-7-carbaguanine + 2 NADP(+) = 7-cyano-7-deazaguanine + 2 NADPH + 3 H(+). The protein operates within tRNA modification; tRNA-queuosine biosynthesis. In terms of biological role, catalyzes the NADPH-dependent reduction of 7-cyano-7-deazaguanine (preQ0) to 7-aminomethyl-7-deazaguanine (preQ1). The sequence is that of NADPH-dependent 7-cyano-7-deazaguanine reductase from Prochlorococcus marinus (strain NATL2A).